The following is a 179-amino-acid chain: Embryo-specific protein ATS3A (179 aa).

An N-terminal signal peptide occupies residues 1–22 (MLRLAIPLFLFALCSFTLFSSA). The PLAT domain maps to 48–158 (CSYTVIIKTS…NSVWYGFNVC (111 aa)).

Interacts with EULS3 (via N-terminus). Expressed in roots, rosette leaves, stems, cauline leaves and flowers.

Its subcellular location is the secreted. May play a role during embryo development. The sequence is that of Embryo-specific protein ATS3A from Arabidopsis thaliana (Mouse-ear cress).